The primary structure comprises 447 residues: Probable arabinosyltransferase ARAD1 (447 aa).

At 1-6 (MARKSS) the chain is on the cytoplasmic side. Residues 7–29 (LLKRAAIAVVSVIAIYVILNASV) form a helical; Signal-anchor for type II membrane protein membrane-spanning segment. The Lumenal segment spans residues 30-447 (SRSLPSSSDL…TNQTGLITSI (418 aa)). Positions 32-41 (SLPSSSDLPR) are enriched in low complexity. The segment at 32–52 (SLPSSSDLPRQLIREDDDDEG) is disordered. N-linked (GlcNAc...) asparagine glycans are attached at residues Asn-427, Asn-432, and Asn-439.

It belongs to the glycosyltransferase 47 family. In terms of assembly, homodimer and heterodimer with ARAD2. As to expression, expressed in root vasculature, cotyledons, leaves, stems, vascular tissue of sepals, petals and stamens, pollen grains, mature siliques and abscission region of seeds.

The protein localises to the golgi apparatus membrane. Functionally, probable arabinosyl transferase responsible for the polymerization of arabinose into the arabinan of arabinogalactan. May function as inverting enzyme using UDP-beta-L-arabinopyranoside. May be important for arabinan side chains of rhamnogalacturonan I (RG-I), a major component of pectins. Cell wall pectic arabinans are involved in thigmomorphogenesis response of inflorescence stems to mechanical stress. The polypeptide is Probable arabinosyltransferase ARAD1 (ARAD1) (Arabidopsis thaliana (Mouse-ear cress)).